The primary structure comprises 308 residues: MKNLTGLCNLPAGDIHTLLDLAAVFKKRLVTPDPSFSVTLQNKRIALVFFENSTRTRFSFDIAARHLGGSTLSFSASGSSVSKGESLGDTIRNLEAMQVDAFVLRHASSGAADFIAGITAKTVINAGDGSHEHPTQALLDIFTLREHFGAVKGLNIVILGDVLHSRVARSNIFGLKTLGANVAVCGPATLLFSDTSHLGVSIFTDLDKAIEWADAALVLRLQLERATGGYLPSLEEYSTHFGLNDERLERVRKHLLVLHPGPINREIEISNNVADRIQPPGYSKSMLLEQVSNGVAVRMAVLQTLLAG.

Carbamoyl phosphate is bound by residues Arg55 and Thr56. Lys83 contributes to the L-aspartate binding site. Carbamoyl phosphate is bound by residues Arg105, His133, and Gln136. Positions 166 and 220 each coordinate L-aspartate. Carbamoyl phosphate-binding residues include Gly261 and Pro262.

It belongs to the aspartate/ornithine carbamoyltransferase superfamily. ATCase family. As to quaternary structure, heterododecamer (2C3:3R2) of six catalytic PyrB chains organized as two trimers (C3), and six regulatory PyrI chains organized as three dimers (R2).

The catalysed reaction is carbamoyl phosphate + L-aspartate = N-carbamoyl-L-aspartate + phosphate + H(+). The protein operates within pyrimidine metabolism; UMP biosynthesis via de novo pathway; (S)-dihydroorotate from bicarbonate: step 2/3. Its function is as follows. Catalyzes the condensation of carbamoyl phosphate and aspartate to form carbamoyl aspartate and inorganic phosphate, the committed step in the de novo pyrimidine nucleotide biosynthesis pathway. The polypeptide is Aspartate carbamoyltransferase catalytic subunit (Chlorobium limicola (strain DSM 245 / NBRC 103803 / 6330)).